Here is a 355-residue protein sequence, read N- to C-terminus: UDP-N-acetylglucosamine--N-acetylmuramyl-(pentapeptide) pyrophosphoryl-undecaprenol N-acetylglucosamine transferase (355 aa).

UDP-N-acetyl-alpha-D-glucosamine contacts are provided by residues 7-9, Asn119, Arg159, Ser187, Ile241, and Gln286; that span reads TGG.

It belongs to the glycosyltransferase 28 family. MurG subfamily.

The protein resides in the cell inner membrane. The catalysed reaction is di-trans,octa-cis-undecaprenyl diphospho-N-acetyl-alpha-D-muramoyl-L-alanyl-D-glutamyl-meso-2,6-diaminopimeloyl-D-alanyl-D-alanine + UDP-N-acetyl-alpha-D-glucosamine = di-trans,octa-cis-undecaprenyl diphospho-[N-acetyl-alpha-D-glucosaminyl-(1-&gt;4)]-N-acetyl-alpha-D-muramoyl-L-alanyl-D-glutamyl-meso-2,6-diaminopimeloyl-D-alanyl-D-alanine + UDP + H(+). It participates in cell wall biogenesis; peptidoglycan biosynthesis. Cell wall formation. Catalyzes the transfer of a GlcNAc subunit on undecaprenyl-pyrophosphoryl-MurNAc-pentapeptide (lipid intermediate I) to form undecaprenyl-pyrophosphoryl-MurNAc-(pentapeptide)GlcNAc (lipid intermediate II). The polypeptide is UDP-N-acetylglucosamine--N-acetylmuramyl-(pentapeptide) pyrophosphoryl-undecaprenol N-acetylglucosamine transferase (Nitrosomonas eutropha (strain DSM 101675 / C91 / Nm57)).